The sequence spans 509 residues: ATP synthase subunit beta (509 aa).

ATP is bound at residue 167–174 (GGAGVGKT). Residues 476 to 509 (ESLGAKMEDTSGDGAPAQSDSKSDSKGDDADKDA) form a disordered region. A compositionally biased stretch (basic and acidic residues) spans 496-509 (SKSDSKGDDADKDA).

This sequence belongs to the ATPase alpha/beta chains family. F-type ATPases have 2 components, CF(1) - the catalytic core - and CF(0) - the membrane proton channel. CF(1) has five subunits: alpha(3), beta(3), gamma(1), delta(1), epsilon(1). CF(0) has three main subunits: a(1), b(2) and c(9-12). The alpha and beta chains form an alternating ring which encloses part of the gamma chain. CF(1) is attached to CF(0) by a central stalk formed by the gamma and epsilon chains, while a peripheral stalk is formed by the delta and b chains.

The protein resides in the cell membrane. The catalysed reaction is ATP + H2O + 4 H(+)(in) = ADP + phosphate + 5 H(+)(out). Produces ATP from ADP in the presence of a proton gradient across the membrane. The catalytic sites are hosted primarily by the beta subunits. The sequence is that of ATP synthase subunit beta from Mycobacterium sp. (strain KMS).